The chain runs to 426 residues: UPF0329 protein ECU06_0040 (426 aa).

Over residues 136–172 the composition is skewed to basic and acidic residues; sequence RQRKREEETERSVKELVGDEEKAKSKEEKAKSKEEKA. Residues 136–230 form a disordered region; that stretch reads RQRKREEETE…GGKKKSKGGR (95 aa). Over residues 220–230 the composition is skewed to basic residues; sequence KGGKKKSKGGR.

The protein belongs to the UPF0329 family.

In Encephalitozoon cuniculi (strain GB-M1) (Microsporidian parasite), this protein is UPF0329 protein ECU06_0040.